The sequence spans 249 residues: tRNA (guanine-N(1)-)-methyltransferase (249 aa).

S-adenosyl-L-methionine is bound by residues G121 and 141 to 146 (LGDFVL).

Belongs to the RNA methyltransferase TrmD family. As to quaternary structure, homodimer.

The protein localises to the cytoplasm. It carries out the reaction guanosine(37) in tRNA + S-adenosyl-L-methionine = N(1)-methylguanosine(37) in tRNA + S-adenosyl-L-homocysteine + H(+). In terms of biological role, specifically methylates guanosine-37 in various tRNAs. The chain is tRNA (guanine-N(1)-)-methyltransferase from Cereibacter sphaeroides (strain KD131 / KCTC 12085) (Rhodobacter sphaeroides).